The sequence spans 473 residues: Tubulin gamma chain (473 aa).

Positions Thr-33–Glu-56 are disordered. The segment covering Ser-43–Glu-56 has biased composition (basic and acidic residues). Ala-143 to Gly-149 provides a ligand contact to GTP.

It belongs to the tubulin family. In terms of assembly, interacts with SPC72, SPC97 and SPC98.

The protein resides in the cytoplasm. The protein localises to the cytoskeleton. Its subcellular location is the microtubule organizing center. It is found in the spindle pole body. Its function is as follows. Tubulin is the major constituent of microtubules. The gamma chain is found at microtubule organizing centers (MTOC) such as the spindle poles or the centrosome, suggesting that it is involved in the minus-end nucleation of microtubule assembly. TUB4 is an important spindle pole body component that organizes both cytoplasmic and nuclear microtubule arrays. The sequence is that of Tubulin gamma chain (TUB4) from Saccharomyces cerevisiae (strain ATCC 204508 / S288c) (Baker's yeast).